The chain runs to 477 residues: MYMAIMIILFLSSILLSLLLLLRKHLSHFSYPNLPPGNTGLPLIGESFSFLSAGRQGHPEKFITDRVRRFSSSSSCVFKTHLFGSPTAVVTGASGNKFLFTNENKLVVSWWPDSVNKIFPSSMQTSSKEEARKLRMLLSQFMKPEALRRYVGVMDEIAQRHFETEWANQDQVIVFPLTKKFTFSIACRSFLSMEDPARVRQLEEQFNTVAVGIFSIPIDLPGTRFNRAIKASRLLRKEVSAIVRQRKEELKAGKALEEHDILSHMLMNIGETKDEDLADKIIGLLIGGHDTASIVCTFVVNYLAEFPHVYQRVLQEQKEILKEKKEKEGLRWEDIEKMRYSWNVACEVMRIVPPLSGTFREAIDHFSFKGFYIPKGWKLYWSATATHMNPDYFPEPERFEPNRFEGSGPKPYTYVPFGGGPRMCPGKEYARLEILIFMHNLVNRFKWEKVFPNENKIVVDPLPIPDKGLPIRIFPQS.

A helical membrane pass occupies residues 2 to 22 (YMAIMIILFLSSILLSLLLLL). C424 lines the heme pocket.

It belongs to the cytochrome P450 family. Requires heme as cofactor.

Its subcellular location is the membrane. Its function is as follows. Possesses triterpene oxidizing activity. Catalyzes the C28 hydroxylation of alpha-amyrin, beta-amyrin, and lupeol, producing uvaol, erythrodiol, and betulin, respectively. Catalyzes the C28 carboxylation of alpha- and beta-amyrin. The polypeptide is Cytochrome P450 716A1 (Arabidopsis thaliana (Mouse-ear cress)).